We begin with the raw amino-acid sequence, 316 residues long: Beta-ketoacyl-[acyl-carrier-protein] synthase III 1 (316 aa).

Active-site residues include C112 and H243. Residues 244-248 (QANYR) are ACP-binding. Residue N273 is part of the active site.

It belongs to the thiolase-like superfamily. FabH family. As to quaternary structure, homodimer.

The protein resides in the cytoplasm. The enzyme catalyses malonyl-[ACP] + acetyl-CoA + H(+) = 3-oxobutanoyl-[ACP] + CO2 + CoA. It functions in the pathway lipid metabolism; fatty acid biosynthesis. In terms of biological role, catalyzes the condensation reaction of fatty acid synthesis by the addition to an acyl acceptor of two carbons from malonyl-ACP. Catalyzes the first condensation reaction which initiates fatty acid synthesis and may therefore play a role in governing the total rate of fatty acid production. Possesses both acetoacetyl-ACP synthase and acetyl transacylase activities. Its substrate specificity determines the biosynthesis of branched-chain and/or straight-chain of fatty acids. In Vibrio vulnificus (strain YJ016), this protein is Beta-ketoacyl-[acyl-carrier-protein] synthase III 1.